The chain runs to 328 residues: 4-hydroxythreonine-4-phosphate dehydrogenase (328 aa).

Positions 135 and 136 each coordinate substrate. Positions 165, 210, and 265 each coordinate a divalent metal cation. Lys273, Asn282, and Arg291 together coordinate substrate.

It belongs to the PdxA family. As to quaternary structure, homodimer. The cofactor is Zn(2+). Mg(2+) serves as cofactor. Requires Co(2+) as cofactor.

It is found in the cytoplasm. The catalysed reaction is 4-(phosphooxy)-L-threonine + NAD(+) = 3-amino-2-oxopropyl phosphate + CO2 + NADH. It participates in cofactor biosynthesis; pyridoxine 5'-phosphate biosynthesis; pyridoxine 5'-phosphate from D-erythrose 4-phosphate: step 4/5. In terms of biological role, catalyzes the NAD(P)-dependent oxidation of 4-(phosphooxy)-L-threonine (HTP) into 2-amino-3-oxo-4-(phosphooxy)butyric acid which spontaneously decarboxylates to form 3-amino-2-oxopropyl phosphate (AHAP). This Pseudomonas aeruginosa (strain ATCC 15692 / DSM 22644 / CIP 104116 / JCM 14847 / LMG 12228 / 1C / PRS 101 / PAO1) protein is 4-hydroxythreonine-4-phosphate dehydrogenase.